The chain runs to 389 residues: Probable acyl-CoA dehydrogenase fadE25 (389 aa).

It belongs to the acyl-CoA dehydrogenase family. Requires FAD as cofactor.

It carries out the reaction a 2,3-saturated acyl-CoA + A = a 2,3-dehydroacyl-CoA + AH2. This Mycobacterium leprae (strain TN) protein is Probable acyl-CoA dehydrogenase fadE25 (fadE25).